A 234-amino-acid chain; its full sequence is Large ribosomal subunit protein uL1 (234 aa).

Belongs to the universal ribosomal protein uL1 family. In terms of assembly, part of the 50S ribosomal subunit.

Functionally, binds directly to 23S rRNA. The L1 stalk is quite mobile in the ribosome, and is involved in E site tRNA release. In terms of biological role, protein L1 is also a translational repressor protein, it controls the translation of the L11 operon by binding to its mRNA. This is Large ribosomal subunit protein uL1 from Maridesulfovibrio salexigens (strain ATCC 14822 / DSM 2638 / NCIMB 8403 / VKM B-1763) (Desulfovibrio salexigens).